The following is a 473-amino-acid chain: Photosystem II CP43 reaction center protein (473 aa).

Residues 1-14 (MKTLYSLRRFYPVE) constitute a propeptide that is removed on maturation. N-acetylthreonine is present on threonine 15. The residue at position 15 (threonine 15) is a Phosphothreonine. Helical transmembrane passes span 69-93 (LFEVAHFVPEKPMYEQGLILLPHLA), 134-155 (LLGPETLEESFPFFGYVWKDRN), 178-200 (KALYFGGVYDTWAPGGGDVRKIT), 255-275 (KPFAWARRALVWSGEAYLSYS), and 291-312 (WFNNTAYPSEFYGPTGPEASQA). Position 367 (glutamate 367) interacts with [CaMn4O5] cluster. The helical transmembrane segment at 447-471 (RARAAAAGFEKGIDRDFEPVLSMTP) threads the bilayer.

The protein belongs to the PsbB/PsbC family. PsbC subfamily. In terms of assembly, PSII is composed of 1 copy each of membrane proteins PsbA, PsbB, PsbC, PsbD, PsbE, PsbF, PsbH, PsbI, PsbJ, PsbK, PsbL, PsbM, PsbT, PsbX, PsbY, PsbZ, Psb30/Ycf12, at least 3 peripheral proteins of the oxygen-evolving complex and a large number of cofactors. It forms dimeric complexes. Binds multiple chlorophylls and provides some of the ligands for the Ca-4Mn-5O cluster of the oxygen-evolving complex. It may also provide a ligand for a Cl- that is required for oxygen evolution. PSII binds additional chlorophylls, carotenoids and specific lipids. is required as a cofactor.

It is found in the plastid. The protein localises to the chloroplast thylakoid membrane. Functionally, one of the components of the core complex of photosystem II (PSII). It binds chlorophyll and helps catalyze the primary light-induced photochemical processes of PSII. PSII is a light-driven water:plastoquinone oxidoreductase, using light energy to abstract electrons from H(2)O, generating O(2) and a proton gradient subsequently used for ATP formation. This is Photosystem II CP43 reaction center protein from Helianthus annuus (Common sunflower).